The chain runs to 98 residues: Small ribosomal subunit protein uS19 (98 aa).

The interval 77–98 is disordered; it reads TRTYRGHAGGKSEKGGSAPRKK.

The protein belongs to the universal ribosomal protein uS19 family.

In terms of biological role, protein S19 forms a complex with S13 that binds strongly to the 16S ribosomal RNA. The sequence is that of Small ribosomal subunit protein uS19 from Chlorobium phaeobacteroides (strain BS1).